A 692-amino-acid polypeptide reads, in one-letter code: Proprotein convertase subtilisin/kexin type 9 (692 aa).

Positions 1–30 are cleaved as a signal peptide; it reads MGTVSSRRSWWPLPLLLLLLLLLGPAGARA. Residues 31-152 constitute a propeptide that is removed on maturation; sequence QEDEDGDYEE…IEEDSSVFAQ (122 aa). Sulfotyrosine is present on Tyr-38. Ser-47 is modified (phosphoserine). Residues 77–149 form the Inhibitor I9 domain; it reads TYVVVLKEET…VDYIEEDSSV (73 aa). A Peptidase S8 domain is found at 155-461; the sequence is PWNLERITPP…GWQLFCRTVW (307 aa). Catalysis depends on charge relay system residues Asp-186 and His-226. 2 disulfide bridges follow: Cys-223–Cys-255 and Cys-323–Cys-358. Ser-386 functions as the Charge relay system in the catalytic mechanism. Positions 450–692 are C-terminal domain; the sequence is GAGWQLFCRT…HLAQASQELQ (243 aa). 3 disulfides stabilise this stretch: Cys-457-Cys-527, Cys-477-Cys-526, and Cys-486-Cys-509. N-linked (GlcNAc...) asparagine glycosylation is present at Asn-533. Cystine bridges form between Cys-534–Cys-601, Cys-552–Cys-600, Cys-562–Cys-588, Cys-608–Cys-679, Cys-626–Cys-678, and Cys-635–Cys-654. Ser-688 is subject to Phosphoserine.

This sequence belongs to the peptidase S8 family. In terms of assembly, monomer. Can self-associate to form dimers and higher multimers which may have increased LDLR degrading activity. The precursor protein but not the mature protein may form multimers. Interacts with APOB, VLDLR, LRP8/APOER2 and BACE1. The full-length immature form (pro-PCSK9) interacts with SCNN1A, SCNN1B and SCNN1G. The pro-PCSK9 form (via C-terminal domain) interacts with LDLR. Interacts (via the C-terminal domain) with ANXA2 (via repeat Annexin 1); the interaction inhibits the degradation of LDLR. Requires Ca(2+) as cofactor. Post-translationally, cleavage by furin and PCSK5 generates a truncated inactive protein that is unable to induce LDLR degradation. In terms of processing, undergoes autocatalytic cleavage in the endoplasmic reticulum to release the propeptide from the N-terminus and the cleavage of the propeptide is strictly required for its maturation and activation. The cleaved propeptide however remains associated with the catalytic domain through non-covalent interactions, preventing potential substrates from accessing its active site. As a result, it is secreted from cells as a propeptide-containing, enzymatically inactive protein. Phosphorylation protects the propeptide against proteolysis.

It is found in the cytoplasm. The protein resides in the secreted. It localises to the endosome. Its subcellular location is the lysosome. The protein localises to the cell surface. It is found in the endoplasmic reticulum. The protein resides in the golgi apparatus. With respect to regulation, its proteolytic activity is autoinhibited by the non-covalent binding of the propeptide to the catalytic domain. Inhibited by EGTA. Functionally, crucial player in the regulation of plasma cholesterol homeostasis. Binds to low-density lipid receptor family members: low density lipoprotein receptor (LDLR), very low density lipoprotein receptor (VLDLR), apolipoprotein E receptor (LRP1/APOER) and apolipoprotein receptor 2 (LRP8/APOER2), and promotes their degradation in intracellular acidic compartments. Acts via a non-proteolytic mechanism to enhance the degradation of the hepatic LDLR through a clathrin LDLRAP1/ARH-mediated pathway. May prevent the recycling of LDLR from endosomes to the cell surface or direct it to lysosomes for degradation. Can induce ubiquitination of LDLR leading to its subsequent degradation. Inhibits intracellular degradation of APOB via the autophagosome/lysosome pathway in a LDLR-independent manner. Involved in the disposal of non-acetylated intermediates of BACE1 in the early secretory pathway. Inhibits epithelial Na(+) channel (ENaC)-mediated Na(+) absorption by reducing ENaC surface expression primarily by increasing its proteasomal degradation. Regulates neuronal apoptosis via modulation of LRP8/APOER2 levels and related anti-apoptotic signaling pathways. This chain is Proprotein convertase subtilisin/kexin type 9 (PCSK9), found in Pan troglodytes (Chimpanzee).